Here is a 473-residue protein sequence, read N- to C-terminus: Cysteine--tRNA ligase (473 aa).

C30 contacts Zn(2+). Residues 32–42 carry the 'HIGH' region motif; that stretch reads MTVYDYCHIGH. C213, H238, and E242 together coordinate Zn(2+). Residues 270–274 carry the 'KMSKS' region motif; that stretch reads KMSKS. Position 273 (K273) interacts with ATP.

The protein belongs to the class-I aminoacyl-tRNA synthetase family. Monomer. Zn(2+) is required as a cofactor.

It localises to the cytoplasm. The enzyme catalyses tRNA(Cys) + L-cysteine + ATP = L-cysteinyl-tRNA(Cys) + AMP + diphosphate. The polypeptide is Cysteine--tRNA ligase (Acinetobacter baumannii (strain AB307-0294)).